We begin with the raw amino-acid sequence, 378 residues long: B3 domain-containing protein Os03g0622200 (378 aa).

Residues 29–124 constitute a DNA-binding region (TF-B3 1); the sequence is SKHFLKHMVG…SFDVLIFDPS (96 aa). The segment at 140–159 is disordered; sequence GRAENSAGAEQGGRNGRRTP. Positions 256–370 form a DNA-binding region, TF-B3 2; sequence FVQVIHSSHV…TMTVHVLRRV (115 aa).

Its subcellular location is the nucleus. The polypeptide is B3 domain-containing protein Os03g0622200 (Oryza sativa subsp. japonica (Rice)).